A 407-amino-acid chain; its full sequence is Imidazolonepropionase (407 aa).

Residues histidine 74 and histidine 76 each contribute to the Fe(3+) site. Positions 74 and 76 each coordinate Zn(2+). 4-imidazolone-5-propanoate is bound by residues arginine 83, tyrosine 146, and histidine 179. Tyrosine 146 provides a ligand contact to N-formimidoyl-L-glutamate. Fe(3+) is bound at residue histidine 244. Position 244 (histidine 244) interacts with Zn(2+). Position 247 (glutamine 247) interacts with 4-imidazolone-5-propanoate. Aspartate 319 serves as a coordination point for Fe(3+). Aspartate 319 contacts Zn(2+). Residues asparagine 321 and glycine 323 each contribute to the N-formimidoyl-L-glutamate site. Threonine 324 contacts 4-imidazolone-5-propanoate.

This sequence belongs to the metallo-dependent hydrolases superfamily. HutI family. Requires Zn(2+) as cofactor. It depends on Fe(3+) as a cofactor.

It is found in the cytoplasm. It catalyses the reaction 4-imidazolone-5-propanoate + H2O = N-formimidoyl-L-glutamate. It functions in the pathway amino-acid degradation; L-histidine degradation into L-glutamate; N-formimidoyl-L-glutamate from L-histidine: step 3/3. Functionally, catalyzes the hydrolytic cleavage of the carbon-nitrogen bond in imidazolone-5-propanoate to yield N-formimidoyl-L-glutamate. It is the third step in the universal histidine degradation pathway. This chain is Imidazolonepropionase, found in Salmonella heidelberg (strain SL476).